The chain runs to 437 residues: Vitellogenin-1 (437 aa).

The N-terminal stretch at 1–19 is a signal peptide; that stretch reads MNPLKIFCFLALVIAVASA. Disordered stretches follow at residues 161 to 194 and 405 to 437; these read QQQP…ESWK and PKSP…QNQE. Composition is skewed to polar residues over residues 174–184 and 427–437; these read GSSQGNQGATS and SWKSGKNQNQE.

The protein belongs to the AB hydrolase superfamily. Lipase family. As to expression, synthesized in the fat body and ovarian follicle cells and accumulate in the oocyte.

It localises to the secreted. In terms of biological role, vitellogenin is the major yolk protein of eggs where it is used as a food source during embryogenesis. The protein is Vitellogenin-1 (VG1-GAMMA) of Ceratitis capitata (Mediterranean fruit fly).